A 399-amino-acid chain; its full sequence is Phosphoglycerate kinase (399 aa).

Substrate contacts are provided by residues 24 to 26 (DLN), Arg41, 64 to 67 (HLGR), Arg123, and Arg160. ATP-binding positions include Lys210, Gly298, Glu329, and 355 to 358 (GGDS).

It belongs to the phosphoglycerate kinase family. In terms of assembly, monomer.

It localises to the cytoplasm. The enzyme catalyses (2R)-3-phosphoglycerate + ATP = (2R)-3-phospho-glyceroyl phosphate + ADP. It functions in the pathway carbohydrate degradation; glycolysis; pyruvate from D-glyceraldehyde 3-phosphate: step 2/5. This is Phosphoglycerate kinase from Salinispora arenicola (strain CNS-205).